The following is a 511-amino-acid chain: Ent-copalyl diphosphate synthase (511 aa).

Residues aspartate 291 and aspartate 293 each coordinate a divalent metal cation. The DXDD motif signature appears at 291 to 294 (DSDD).

The protein belongs to the terpene synthase family. In terms of assembly, homodimer. A divalent metal cation is required as a cofactor.

The catalysed reaction is (2E,6E,10E)-geranylgeranyl diphosphate = ent-copalyl diphosphate. Its pathway is antibiotic biosynthesis. Its function is as follows. Involved in viguiepinol biosynthesis. Catalyzes the conversion of geranylgeranyl diphosphate (GGDP) into copalyl diphosphate (ent-CDP). The chain is Ent-copalyl diphosphate synthase from Streptomyces sp. (strain KO-3988).